The primary structure comprises 156 residues: Small ribosomal subunit protein uS7 (156 aa).

This sequence belongs to the universal ribosomal protein uS7 family. Part of the 30S ribosomal subunit. Contacts proteins S9 and S11.

Functionally, one of the primary rRNA binding proteins, it binds directly to 16S rRNA where it nucleates assembly of the head domain of the 30S subunit. Is located at the subunit interface close to the decoding center, probably blocks exit of the E-site tRNA. The sequence is that of Small ribosomal subunit protein uS7 from Photorhabdus laumondii subsp. laumondii (strain DSM 15139 / CIP 105565 / TT01) (Photorhabdus luminescens subsp. laumondii).